The sequence spans 453 residues: Sialic acid-binding Ig-like lectin 6 (453 aa).

Residues 1 to 26 (MQGAQEASASEMLPLLLPLLWAGALA) form the signal peptide. At 27-347 (QERRFQLEGP…WKPEGRAGGV (321 aa)) the chain is on the extracellular side. The region spanning 28-123 (ERRFQLEGPE…RDNAAYFFRL (96 aa)) is the Ig-like V-type domain. Disulfide bonds link C46/C172, C51/C104, and C166/C215. N-linked (GlcNAc...) asparagine glycosylation occurs at N103. R122 contributes to the N-acetylneuraminate binding site. Residues 148-231 (PNISIPGTLE…AGVTMERTIQ (84 aa)) enclose the Ig-like C2-type 1 domain. Residues N149 and N163 are each glycosylated (N-linked (GlcNAc...) asparagine). A glycan (N-linked (GlcNAc...) asparagine) is linked at N233. In terms of domain architecture, Ig-like C2-type 2 spans 238 to 333 (PQKVAISIFQ…PLGSLQISLS (96 aa)). C274 and C319 are joined by a disulfide. A helical membrane pass occupies residues 348–368 (LGAVWGASITTLVFLCVCFIF). Topologically, residues 369–453 (RVKTRRKKAA…TEYSEIKIHK (85 aa)) are cytoplasmic. The ITIM motif signature appears at 424 to 429 (LHYAVL). The short motif at 444–449 (TEYSEI) is the SLAM-like motif element.

This sequence belongs to the immunoglobulin superfamily. SIGLEC (sialic acid binding Ig-like lectin) family. In terms of assembly, interacts with LEP. As to expression, expressed at high levels in placenta (cyto- and syncytiotrophoblastic cells) and at lower levels in spleen, peripheral blood leukocytes (predominantly B-cells) and small intestine.

It is found in the cell membrane. Its subcellular location is the secreted. Putative adhesion molecule that mediates sialic-acid dependent binding to cells. Binds to alpha-2,6-linked sialic acid. The sialic acid recognition site may be masked by cis interactions with sialic acids on the same cell surface. The sequence is that of Sialic acid-binding Ig-like lectin 6 (SIGLEC6) from Homo sapiens (Human).